We begin with the raw amino-acid sequence, 255 residues long: MTQLHNRTAGQETNRVMTPDELEAALRAVGAERYHNLHPFHRLLHDGALTRGQVQAWALNRYHYQASIPAKDAALLSRLPTAELRREWRRRLVDHDGTEPGTGGIARWLKLAEGVGLDAAYVESREGLLPTTRFAVDAYVTFCREKPILEAIASSLTEMFSPTIIRERVSGMLANYDWVSEETLAYFKPRLTQAPRDVDFALAYVKEHARTPEQQQAVIAALRFKCDVLWSQLDALYYSYVAPGNIPPGAFVPEV.

This sequence belongs to the PqqC family.

The enzyme catalyses 6-(2-amino-2-carboxyethyl)-7,8-dioxo-1,2,3,4,7,8-hexahydroquinoline-2,4-dicarboxylate + 3 O2 = pyrroloquinoline quinone + 2 H2O2 + 2 H2O + H(+). It participates in cofactor biosynthesis; pyrroloquinoline quinone biosynthesis. Functionally, ring cyclization and eight-electron oxidation of 3a-(2-amino-2-carboxyethyl)-4,5-dioxo-4,5,6,7,8,9-hexahydroquinoline-7,9-dicarboxylic-acid to PQQ. This Granulibacter bethesdensis (strain ATCC BAA-1260 / CGDNIH1) protein is Pyrroloquinoline-quinone synthase.